Reading from the N-terminus, the 728-residue chain is Dynamin-like protein 1 (728 aa).

The interval 1 to 119 (MKELFQKIWQ…ILQEKVQSID (119 aa)) is assembly domain, required for tetramerization. A Dynamin-type G domain is found at 159–442 (QNLEFNIAIT…LYAGEKSKIA (284 aa)). The interval 169 to 176 (GVMNAGKS) is G1 motif. 171–177 (MNAGKSS) provides a ligand contact to GDP. The segment at 195 to 196 (ET) is G2 motif. The G3 motif stretch occupies residues 298–301 (DTPG). Residues 358–361 (TKAD) are G4 motif. Position 359 (lysine 359) interacts with GDP. Glutamate 388 is a region of interest (G5 motif). GDP is bound at residue 400-402 (SAK). The tract at residues 470–695 (ENKQGVSEEN…LESLEKVLQS (226 aa)) is required for liposome binding but not for tetramerization.

It belongs to the TRAFAC class dynamin-like GTPase superfamily. Dynamin/Fzo/YdjA family. Forms a 2:2 heterotetramer with DLP1. DLP2 forms a central back-to-back dimer flanked on each side by a DLP1 subunit. In the crystal structures the 2 DLP1 subunits are in very different conformations.

The protein localises to the cytoplasm. The protein resides in the cytosol. It catalyses the reaction GTP + H2O = GDP + phosphate + H(+). The heterotetrameric DLP1(2)-DLP2(2) complex tethers liposomes and may mediate their fusion. Initial binding is probably mediated by DLP1, while DLP2 couples DLP1 subunits and increases the effective reach of the complex up to 45 nm. The role of the nucleotide is unknown. This subunit alone weakly binds to liposomes; GTP, GDP, GMPPCP and GMPPNP do not change heterotetramer binding. Tetramerization is required for GTPase activity, suggesting the GTPase domains (dynamin-type G) from DLP1 and DLP2 must dimerize to reconstitute the GTPase active site. This Campylobacter jejuni subsp. jejuni serotype O:23/36 (strain 81-176) protein is Dynamin-like protein 1.